The sequence spans 277 residues: F-actin-capping protein subunit beta isoforms 1 and 2 (277 aa).

Serine 2 is subject to N-acetylserine.

It belongs to the F-actin-capping protein beta subunit family. Component of the F-actin capping complex, composed of a heterodimer of an alpha and a beta subunit. Component of the WASH complex. In terms of assembly, component of the F-actin capping complex, composed of a heterodimer of an alpha and a beta subunit. Subunit of dynactin, a multiprotein complex part of a tripartite complex with dynein and a adapter, such as BICDL1, BICD2 or HOOK3. The dynactin complex is built around ACTR1A/ACTB filament and consists of an actin-related filament composed of a shoulder domain, a pointed end and a barbed end. Its length is defined by its flexible shoulder domain. As to expression, isoform 1 is detected in pectoral muscle, cardiac muscle and gizzard. Isoform 2 is detected in brain and liver (at protein level). Isoform 2 is the predominant isoform of nonmuscle tissues and isoform 1 is the predominant isoform of muscle tissues.

It is found in the cytoplasm. Its subcellular location is the myofibril. It localises to the sarcomere. The protein localises to the z line. The protein resides in the i band. It is found in the cytoskeleton. Its function is as follows. F-actin-capping proteins bind in a Ca(2+)-independent manner to the fast growing ends of actin filaments (barbed end) thereby blocking the exchange of subunits at these ends. Unlike other capping proteins (such as gelsolin and severin), these proteins do not sever actin filaments. May play a role in the regulation of cell morphology and cytoskeletal organization. In terms of biological role, forms, with CAPZB, the barbed end of the fast growing ends of actin filaments in the dynactin complex and stabilizes dynactin structure. The dynactin multiprotein complex activates the molecular motor dynein for ultra-processive transport along microtubules. The chain is F-actin-capping protein subunit beta isoforms 1 and 2 (CAPZB) from Gallus gallus (Chicken).